The following is a 115-amino-acid chain: NADH-ubiquinone oxidoreductase chain 3 (115 aa).

Helical transmembrane passes span 4–24, 55–75, and 86–106; these read LTALLINITLSLCLITIAFWL, FFLVAITFLLFDLEIALLLPL, and VMMLTSFILVSVLALGLAYEW.

Belongs to the complex I subunit 3 family. In terms of assembly, core subunit of respiratory chain NADH dehydrogenase (Complex I) which is composed of 45 different subunits. Interacts with TMEM186. Interacts with TMEM242.

It localises to the mitochondrion inner membrane. The catalysed reaction is a ubiquinone + NADH + 5 H(+)(in) = a ubiquinol + NAD(+) + 4 H(+)(out). Its function is as follows. Core subunit of the mitochondrial membrane respiratory chain NADH dehydrogenase (Complex I) which catalyzes electron transfer from NADH through the respiratory chain, using ubiquinone as an electron acceptor. Essential for the catalytic activity of complex I. The polypeptide is NADH-ubiquinone oxidoreductase chain 3 (Isthmomys pirrensis (Mount Pirri Isthmus rat)).